We begin with the raw amino-acid sequence, 906 residues long: Peroxisomal hydratase-dehydrogenase-epimerase (906 aa).

2 short-chain dehydrogenase like regions span residues 5-228 and 319-532; these read DFKD…SSAE and SLKD…GTDD. NADP(+)-binding residues include Ile-13, Lys-52, Asn-98, and Lys-131. Catalysis depends on proton donor residues Ser-149 and Tyr-163. The NADP(+) site is built by Tyr-163 and Lys-167. Tyr-163 functions as the Proton acceptor in the catalytic mechanism. The active-site Lowers pKa of active site Tyr is the Lys-167. The active-site Proton acceptor is the Tyr-467. Positions 600 to 633 are disordered; sequence AVGGDDDDDDEDEEEDEGDEEEDEEDEEEDDPVW. Acidic residues predominate over residues 603-630; sequence GDDDDDDEDEEEDEGDEEEDEEDEEEDD. (3R)-3-hydroxydecanoyl-CoA-binding residues include His-699, Gly-700, Lys-729, Tyr-757, Asp-808, Asn-810, Gly-831, Phe-856, Thr-857, and Gly-858. Positions 782–893 constitute a MaoC-like domain; that stretch reads APKRAPDYQV…VVDRGTIAIN (112 aa). The Microbody targeting signal motif lies at 904-906; that stretch reads AKI.

It belongs to the short-chain dehydrogenases/reductases (SDR) family. Monomer.

The protein localises to the peroxisome. The catalysed reaction is a (3R)-3-hydroxyacyl-CoA = a (2E)-enoyl-CoA + H2O. It carries out the reaction a (3R)-3-hydroxyacyl-CoA + NAD(+) = a 3-oxoacyl-CoA + NADH + H(+). Its pathway is lipid metabolism; fatty acid beta-oxidation. In terms of biological role, second trifunctional enzyme acting on the beta-oxidation pathway for fatty acids, possessing hydratase-dehydrogenase-epimerase activities. Converts trans-2-enoyl-CoA via D-3-hydroxyacyl-CoA to 3-ketoacyl-CoA. This Candida tropicalis (Yeast) protein is Peroxisomal hydratase-dehydrogenase-epimerase.